Consider the following 339-residue polypeptide: MAAACGPGAAGYCLLLGLHLFLLTAGPALGWNDPDRMLLRDVKALTLHYDRYTTSRRLDPIPQLKCVGGTAGCDSYTPKVIQCQNKGWDGYDVQWECKTDLDIAYKFGKTVVSCEGYESSEDQYVLRGSCGLEYNLDYTELGLQKLKESGKQHGFASFSDYYYKWSSADSCNMSGLITIVVLLGIAFVVYKLFLSDGQYSPPPYSEYPPFSHRYQRFTNSAGPPPPGFKSEFTGPQNTGHGATSGFGSAFTGQQGYENSGPGFWTGLGTGGILGYLFGSNRAATPFSDSWYYPSYPPSYPGTWNRAYSPLHGGSGSYSVCSNSDTKTRTASGYGGTRRR.

The N-terminal stretch at 1–30 (MAAACGPGAAGYCLLLGLHLFLLTAGPALG) is a signal peptide. Topologically, residues 31–173 (WNDPDRMLLR…KWSSADSCNM (143 aa)) are lumenal. A helical membrane pass occupies residues 174-194 (SGLITIVVLLGIAFVVYKLFL). At 195–339 (SDGQYSPPPY…ASGYGGTRRR (145 aa)) the chain is on the cytoplasmic side. A compositionally biased stretch (polar residues) spans 318–330 (SVCSNSDTKTRTA). The tract at residues 318 to 339 (SVCSNSDTKTRTASGYGGTRRR) is disordered.

Belongs to the SARAF family. Interacts with STIM1; the interaction is inhibited by the interaction of STIM1 with EFHB. Highly expressed in macrophages.

Its subcellular location is the endoplasmic reticulum membrane. Functionally, negative regulator of store-operated Ca(2+) entry (SOCE) involved in protecting cells from Ca(2+) overfilling. In response to cytosolic Ca(2+) elevation after endoplasmic reticulum Ca(2+) refilling, promotes a slow inactivation of STIM (STIM1 or STIM2)-dependent SOCE activity: possibly act by facilitating the deoligomerization of STIM to efficiently turn off ORAI when the endoplasmic reticulum lumen is filled with the appropriate Ca(2+) levels, and thus preventing the overload of the cell with excessive Ca(2+) ions. This is Store-operated calcium entry-associated regulatory factor (SARAF) from Homo sapiens (Human).